The sequence spans 1661 residues: ATP-dependent bile acid permease (1661 aa).

Residues 1–33 (MHHVLNSTRPDHRFWFYDDVTQYGRTKYLNYYT) lie on the Lumenal side of the membrane. The N-linked (GlcNAc...) asparagine glycan is linked to N6. A helical membrane pass occupies residues 34 to 54 (PLVLLIFTVLFITYNIWKHYY). The Cytoplasmic segment spans residues 55–74 (YYDVLHLKQKNPIDELLYSS). A helical transmembrane segment spans residues 75-95 (TDEDEQSPLINNNTITTNYVD). Topologically, residues 96 to 133 (NNCTKDALKNRHFSLEKLKSVKVNGEPHGTPEIVRRGF) are lumenal. N-linked (GlcNAc...) asparagine glycosylation is present at N97. The chain crosses the membrane as a helical span at residues 134-154 (IEKSRIILEFFLVLSQVIIHS). Residues 155-166 (FILLHYVNKNPE) are Cytoplasmic-facing. Residues 167-187 (FTQQGTITGLVEWCALFIIVS) form a helical membrane-spanning segment. Residues 188–205 (LRLANVNQNFKFINKYPG) lie on the Lumenal side of the membrane. A helical membrane pass occupies residues 206-226 (NLWSVSFINYLALFISMILPF). Topologically, residues 227 to 345 (RSIFIHHINS…VKRKRIFSLN (119 aa)) are cytoplasmic. The helical transmembrane segment at 346 to 366 (LFFFFSNYLVLQCFWAFLGSV) threads the bilayer. Residues 354–662 (LVLQCFWAFL…LSDMLSFVVQ (309 aa)) form the ABC transmembrane type-1 1 domain. The Lumenal segment spans residues 367 to 393 (LSFIPTVLLKRILEYVEDQSSAPSNLA). A helical transmembrane segment spans residues 394–414 (WFYVTVMFVGRILVAICQAQA). Topologically, residues 415-495 (LFFGRRVCIR…AFKVSEICGY (81 aa)) are cytoplasmic. Positions 445 to 468 (NKTKPSNEDPQEINDQKSINGDEE) are disordered. A helical membrane pass occupies residues 496–516 (LHSFLEAFVMTVVALALLYRL). Residues 517–519 (LGF) are Lumenal-facing. The chain crosses the membrane as a helical span at residues 520-540 (AAIVGVLIIVAMLPLNYKLAK). The Cytoplasmic segment spans residues 541–602 (YIGDLQKKNL…LLLMRSIVWS (62 aa)). The helical transmembrane segment at 603–623 (ISSFLWFVTPTIVTAASFAYY) threads the bilayer. Residues 624–644 (IYVQGEVLTTPVAFTALSLFT) are Lumenal-facing. The chain crosses the membrane as a helical span at residues 645–665 (LLRDPLDRLSDMLSFVVQSKV). The Cytoplasmic portion of the chain corresponds to 666–1053 (SLDRVQDFLN…SWWVRAWASH (388 aa)). In terms of domain architecture, ABC transporter 1 spans 694 to 935 (FAFENSTISW…GLFGEDELVK (242 aa)). 729–736 (GPTGSGKT) provides a ligand contact to ATP. Phosphoserine is present on residues S936, S940, and S955. Residues 1026-1345 (VSFLASLFLI…LVRLYSEVEM (320 aa)) enclose the ABC transmembrane type-1 2 domain. A helical transmembrane segment spans residues 1054–1074 (NVIAKIIPRAQRAIAFISKKA). Residues 1075 to 1114 (SHLIDWRGSSQISMASAENQPSSGHSTMYYLVLYLIIGFA) are Lumenal-facing. The chain crosses the membrane as a helical span at residues 1115 to 1135 (QALLGAGKTILNFVAGINASR). Residues 1136–1178 (KIFNMILNKVLHSKIRFFDATPTGRIMNRFSKDIEAIDQELTP) are Cytoplasmic-facing. The chain crosses the membrane as a helical span at residues 1179–1199 (YIQGAFYSLIECLSTVILITF). Position 1200 (I1200) is a topological domain, lumenal. The chain crosses the membrane as a helical span at residues 1201 to 1221 (TPQFLSVAIVVSILYYFVGYF). Residues 1222–1292 (YMAGSRELKR…VANRWLAFRI (71 aa)) lie on the Cytoplasmic side of the membrane. Residues 1293–1313 (DMIGSLVIFGAGLFILFNINN) form a helical membrane-spanning segment. The Lumenal segment spans residues 1314–1315 (LD). A helical transmembrane segment spans residues 1316–1336 (SGMAGISLTYAISFTEGALWL). Residues 1337–1661 (VRLYSEVEMN…FVEKLNSKKD (325 aa)) are Cytoplasmic-facing. An ABC transporter 2 domain is found at 1381–1636 (IEVNDLSLRY…KQSAFYSMCE (256 aa)). Residue 1415–1422 (GRTGAGKS) participates in ATP binding.

This sequence belongs to the ABC transporter superfamily. ABCC family. Conjugate transporter (TC 3.A.1.208) subfamily.

The protein resides in the vacuole membrane. Vacuolar class C ABC transporter which regulates the translocation of phosphatidylcholine to the vacuole lumen, the release of lumenal calcium stores, and acts as a negative regulator of vacuole fusion. Exhibits ATP-dependent bile acid transport. In Saccharomyces cerevisiae (strain ATCC 204508 / S288c) (Baker's yeast), this protein is ATP-dependent bile acid permease (YBT1).